We begin with the raw amino-acid sequence, 181 residues long: Lectin beta-1 and beta-2 chains (181 aa).

Mn(2+) contacts are provided by E119 and D121. D121, F123, N125, and D129 together coordinate Ca(2+). Residues D129 and H136 each contribute to the Mn(2+) site.

This sequence belongs to the leguminous lectin family. In terms of assembly, tetramer of two alpha and two beta chains.

The sequence is that of Lectin beta-1 and beta-2 chains from Lathyrus ochrus (Cyprus-vetch).